The sequence spans 275 residues: Small ribosomal subunit protein uS2 (275 aa).

The disordered stretch occupies residues A226–E275. Residues A264–E275 show a composition bias toward low complexity.

This sequence belongs to the universal ribosomal protein uS2 family.

In Xanthomonas campestris pv. campestris (strain ATCC 33913 / DSM 3586 / NCPPB 528 / LMG 568 / P 25), this protein is Small ribosomal subunit protein uS2.